Here is a 578-residue protein sequence, read N- to C-terminus: mRNA-decapping enzyme 1B (578 aa).

The residue at position 2 (Ala2) is an N-acetylalanine. 2 positions are modified to phosphoserine: Ser144 and Ser145. Disordered regions lie at residues 187 to 222 (AICDNPKLIKPVPVRPSSSQRLQGPAPSKTSDPEPQ) and 246 to 265 (RTFAHHHHHHHQQQQETRPV). Residues 248-257 (FAHHHHHHHQ) show a composition bias toward basic residues. Residues Ser274 and Ser335 each carry the phosphoserine modification. Thr380 carries the post-translational modification Phosphothreonine.

It belongs to the DCP1 family. Interacts with DCP1A.

It is found in the cytoplasm. The protein localises to the nucleus. The enzyme catalyses a 5'-end (N(7)-methyl 5'-triphosphoguanosine)-ribonucleoside in mRNA + H2O = N(7)-methyl-GDP + a 5'-end phospho-ribonucleoside in mRNA + 2 H(+). May play a role in the degradation of mRNAs, both in normal mRNA turnover and in nonsense-mediated mRNA decay. May remove the 7-methyl guanine cap structure from mRNA molecules, yielding a 5'-phosphorylated mRNA fragment and 7m-GDP. The polypeptide is mRNA-decapping enzyme 1B (Dcp1b) (Mus musculus (Mouse)).